Consider the following 262-residue polypeptide: MKAKTLIDAYEAFCPLDLSMEGDVKGLQMGSLDKDIRKVMITLDIRESTVAEAIKNEVDLIITKHAPIFKPLKDLVSSPQRDILLDLVKHDISVYVSHTNIDIVPGGLNDWFCDLLEIKEATYLSETKEGFGIGRIGTVKEQALEELASKVKRVFDLDTVRLIRYDKENPLISKIAICGGSGGEFYQDAVQKGADVYITGDIYYHTAQEMLTEGLFAVDPGHHIEVLFTEKLKEKLQGWKEENGWDVSIISSKASTNPFSHL.

A divalent metal cation is bound by residues His65, Asp102, His222, and Glu225.

Belongs to the GTP cyclohydrolase I type 2/NIF3 family. Homohexamer.

This chain is GTP cyclohydrolase 1 type 2 homolog, found in Streptococcus pyogenes serotype M3 (strain ATCC BAA-595 / MGAS315).